A 247-amino-acid chain; its full sequence is PF03932 family protein CutC (247 aa).

It belongs to the CutC family.

It localises to the cytoplasm. This Chromobacterium violaceum (strain ATCC 12472 / DSM 30191 / JCM 1249 / CCUG 213 / NBRC 12614 / NCIMB 9131 / NCTC 9757 / MK) protein is PF03932 family protein CutC.